The sequence spans 489 residues: Mitochondrial-processing peptidase subunit beta (489 aa).

Residues 1 to 45 (MAAAAARVVLLPAARRRLWGFSESLLIRGAAGRSSYFGENRLRST) constitute a mitochondrion transit peptide. Histidine 101 contributes to the Zn(2+) binding site. The Proton acceptor role is filled by glutamate 104. 2 residues coordinate Zn(2+): histidine 105 and glutamate 181.

This sequence belongs to the peptidase M16 family. As to quaternary structure, heterodimer of PMPCA (alpha) and PMPCB (beta) subunits, forming the mitochondrial processing protease (MPP) in which PMPCA is involved in substrate recognition and binding and PMPCB is the catalytic subunit. Requires Zn(2+) as cofactor.

It is found in the mitochondrion matrix. It catalyses the reaction Release of N-terminal transit peptides from precursor proteins imported into the mitochondrion, typically with Arg in position P2.. With respect to regulation, binding to PMPCA is required for catalytic activity. Functionally, catalytic subunit of the essential mitochondrial processing protease (MPP), which cleaves the mitochondrial sequence off newly imported precursors proteins. Preferentially, cleaves after an arginine at position P2. Required for PINK1 turnover by coupling PINK1 mitochondrial import and cleavage, which results in subsequent PINK1 proteolysis. This Pongo abelii (Sumatran orangutan) protein is Mitochondrial-processing peptidase subunit beta (PMPCB).